The primary structure comprises 166 residues: Interferon gamma (166 aa).

A signal peptide spans 1–23; sequence MKYTSYFLALLLCVLLGFSGSYG. Residue Gln24 is modified to Pyrrolidone carboxylic acid. N-linked (GlcNAc...) asparagine glycosylation is found at Asn39 and Asn106.

It belongs to the type II (or gamma) interferon family. As to quaternary structure, homodimer. Interacts with IFNGR1 (via extracellular domain); this interaction promotes IFNGR1 dimerization. In terms of tissue distribution, released primarily from activated T lymphocytes.

It is found in the secreted. Functionally, type II interferon produced by immune cells such as T-cells and NK cells that plays crucial roles in antimicrobial, antiviral, and antitumor responses by activating effector immune cells and enhancing antigen presentation. Primarily signals through the JAK-STAT pathway after interaction with its receptor IFNGR1 to affect gene regulation. Upon IFNG binding, IFNGR1 intracellular domain opens out to allow association of downstream signaling components JAK2, JAK1 and STAT1, leading to STAT1 activation, nuclear translocation and transcription of IFNG-regulated genes. Many of the induced genes are transcription factors such as IRF1 that are able to further drive regulation of a next wave of transcription. Plays a role in class I antigen presentation pathway by inducing a replacement of catalytic proteasome subunits with immunoproteasome subunits. In turn, increases the quantity, quality, and repertoire of peptides for class I MHC loading. Increases the efficiency of peptide generation also by inducing the expression of activator PA28 that associates with the proteasome and alters its proteolytic cleavage preference. Up-regulates as well MHC II complexes on the cell surface by promoting expression of several key molecules such as cathepsins B/CTSB, H/CTSH, and L/CTSL. Participates in the regulation of hematopoietic stem cells during development and under homeostatic conditions by affecting their development, quiescence, and differentiation. The sequence is that of Interferon gamma (IFNG) from Bos indicus (Zebu).